Reading from the N-terminus, the 588-residue chain is ATP-dependent lipid A-core flippase (588 aa).

A run of 6 helical transmembrane segments spans residues 23-43 (FWPV…IDAG), 56-76 (FITI…IGIT), 141-161 (DALT…TVMM), 162-182 (VICW…GIIV), 257-277 (LVIA…STVI), and 278-298 (TISA…IKPM). An ABC transmembrane type-1 domain is found at 28–310 (LLGVLANILY…LTTLNATIQR (283 aa)). Positions 342 to 576 (IEFKHVYHAY…DGHYAQLYKV (235 aa)) constitute an ABC transporter domain. 375-382 (GHSGSGKT) serves as a coordination point for ATP.

The protein belongs to the ABC transporter superfamily. Lipid exporter (TC 3.A.1.106) family. Homodimer.

It is found in the cell inner membrane. It catalyses the reaction ATP + H2O + lipid A-core oligosaccharideSide 1 = ADP + phosphate + lipid A-core oligosaccharideSide 2.. In terms of biological role, involved in lipopolysaccharide (LPS) biosynthesis. Translocates lipid A-core from the inner to the outer leaflet of the inner membrane. Transmembrane domains (TMD) form a pore in the inner membrane and the ATP-binding domain (NBD) is responsible for energy generation. The chain is ATP-dependent lipid A-core flippase from Legionella pneumophila (strain Paris).